Reading from the N-terminus, the 733-residue chain is FYVE, RhoGEF and PH domain-containing protein 3 (733 aa).

Composition is skewed to polar residues over residues 1 to 11, 47 to 60, and 106 to 117; these read MELGRSSSTPQ, HSSS…STRE, and ETASDSRVPQDN. Residues 1–134 are disordered; the sequence is MELGRSSSTP…GVGEEPDPKV (134 aa). Residues 118–129 show a composition bias toward acidic residues; that stretch reads PQEEEDSGVGEE. S124 carries the phosphoserine modification. In terms of domain architecture, DH spans 153-337; sequence KLLHIAQELL…STAADHSNAA (185 aa). The 100-residue stretch at 366–465 folds into the PH 1 domain; the sequence is ELIKEGSIQK…WIQVIQATVE (100 aa). The segment at 481–535 is disordered; the sequence is CSQDEEPTLSPDQPVMSTSSVEPAGVADSNGGTPGIESRKSSSKTRRDKEKPGCK. The span at 517 to 533 shows a compositional bias: basic and acidic residues; that stretch reads ESRKSSSKTRRDKEKPG. The FYVE-type zinc finger occupies 528 to 584; that stretch reads DKEKPGCKSCGETFNSITKRRYRCKLCGEVICRKCSEFKAENSKQSRVCRECFLEEP. Positions 534, 537, 551, 554, 559, 562, 576, and 579 each coordinate Zn(2+). 2 disordered regions span residues 586–612 and 712–733; these read VPPS…DPRP and GDTA…TDTP. In terms of domain architecture, PH 2 spans 612–711; it reads PSLLCGTLNL…WLKALGTAVH (100 aa). T732 is subject to Phosphothreonine.

As to expression, detected in adult brain, spleen, lung and skeletal muscle. Detected in embryos from 7 dpc to 17 dpc.

It localises to the cytoplasm. The protein localises to the cytoskeleton. Promotes the formation of filopodia. May activate CDC42, a member of the Ras-like family of Rho- and Rac proteins, by exchanging bound GDP for free GTP. Plays a role in regulating the actin cytoskeleton and cell shape. This Mus musculus (Mouse) protein is FYVE, RhoGEF and PH domain-containing protein 3 (Fgd3).